Reading from the N-terminus, the 256-residue chain is Trans-aconitate 2-methyltransferase (256 aa).

This sequence belongs to the methyltransferase superfamily. Tam family.

It is found in the cytoplasm. It carries out the reaction trans-aconitate + S-adenosyl-L-methionine = (E)-3-(methoxycarbonyl)pent-2-enedioate + S-adenosyl-L-homocysteine. Its function is as follows. Catalyzes the S-adenosylmethionine monomethyl esterification of trans-aconitate. The polypeptide is Trans-aconitate 2-methyltransferase (Rhizobium rhizogenes (strain K84 / ATCC BAA-868) (Agrobacterium radiobacter)).